Consider the following 231-residue polypeptide: 5'-methylthioadenosine/S-adenosylhomocysteine nucleosidase (231 aa).

The Proton acceptor role is filled by Glu-12. Residues Gly-78, Met-153, and 174 to 175 (ME) each bind substrate. Asp-198 acts as the Proton donor in catalysis.

Belongs to the PNP/UDP phosphorylase family. MtnN subfamily.

It catalyses the reaction S-adenosyl-L-homocysteine + H2O = S-(5-deoxy-D-ribos-5-yl)-L-homocysteine + adenine. The catalysed reaction is S-methyl-5'-thioadenosine + H2O = 5-(methylsulfanyl)-D-ribose + adenine. The enzyme catalyses 5'-deoxyadenosine + H2O = 5-deoxy-D-ribose + adenine. It functions in the pathway amino-acid biosynthesis; L-methionine biosynthesis via salvage pathway; S-methyl-5-thio-alpha-D-ribose 1-phosphate from S-methyl-5'-thioadenosine (hydrolase route): step 1/2. Its function is as follows. Catalyzes the irreversible cleavage of the glycosidic bond in both 5'-methylthioadenosine (MTA) and S-adenosylhomocysteine (SAH/AdoHcy) to adenine and the corresponding thioribose, 5'-methylthioribose and S-ribosylhomocysteine, respectively. Also cleaves 5'-deoxyadenosine, a toxic by-product of radical S-adenosylmethionine (SAM) enzymes, into 5-deoxyribose and adenine. The protein is 5'-methylthioadenosine/S-adenosylhomocysteine nucleosidase of Bacillus pumilus (strain SAFR-032).